The primary structure comprises 656 residues: Tetratricopeptide repeat protein 30 homolog (656 aa).

9 TPR repeats span residues E9–N42, L43–Y76, A141–Q174, G176–D208, I238–D271, R378–L412, L416–H449, T451–D484, and S537–K570.

The protein belongs to the TTC30/dfy-1/fleer family. As to quaternary structure, component of the IFT complex B composed of at least che-2, che-13, dyf-1, dyf-3, dyf-6, dyf-11, dyf-13, ift-20, ift-74, ift-81, ifta-2, osm-1, osm-5 and osm-6. In terms of tissue distribution, expressed in most amphid, both phasmid and several labial-quadrant neurons.

It is found in the cell projection. The protein resides in the cilium. Plays a role in anterograde intraflagellar transport (IFT), the process by which cilia precursors are transported from the base of the cilium to the site of their incorporation at the tip. Specifically required for the kinesin osm-3 to dock onto and move the IFT particles which contain these precursors. Component of the intraflagellar transport (IFT) complex B required for transport of proteins in the motile cilium. May be required for ciliary entrance and transport of specific ciliary cargo proteins such as che-3 which are related to motility. Required for polyglutamylation of axonemal tubulin in sensory cilia. In Caenorhabditis elegans, this protein is Tetratricopeptide repeat protein 30 homolog.